Reading from the N-terminus, the 540-residue chain is Cytosolic carboxypeptidase 6 (540 aa).

The Peptidase M14 domain occupies 167–438 (YPYTYTRFQH…NVARTFLDYY (272 aa)). The Zn(2+) site is built by His230, Glu233, and His328. The active-site Proton donor/acceptor is Glu401.

Belongs to the peptidase M14 family. As to quaternary structure, interacts with MYLK. It depends on Zn(2+) as a cofactor. In terms of tissue distribution, widely expressed. Expressed abundantly in testis, pituitary and brain and to a lower extent in eye, stomach, adrenal and kidney. In brain, expressed at low level in cerebellum as compared to cortex.

It is found in the cytoplasm. It localises to the cytosol. Its subcellular location is the cytoskeleton. The protein localises to the microtubule organizing center. The protein resides in the centrosome. It is found in the centriole. It localises to the golgi apparatus. Its subcellular location is the cilium basal body. The enzyme catalyses (L-glutamyl)(n+1)-gamma-L-glutamyl-L-glutamyl-[protein] + H2O = (L-glutamyl)(n)-gamma-L-glutamyl-L-glutamyl-[protein] + L-glutamate. It catalyses the reaction C-terminal L-alpha-aminoacyl-L-glutamyl-L-glutamyl-[tubulin] + H2O = C-terminal L-alpha-aminoacyl-L-glutamyl-[tubulin] + L-glutamate. Functionally, metallocarboxypeptidase that mediates protein deglutamylation of tubulin and non-tubulin target proteins. Catalyzes the removal of polyglutamate side chains present on the gamma-carboxyl group of glutamate residues within the C-terminal tail of tubulin protein. Specifically cleaves tubulin long-side-chains, while it is not able to remove the branching point glutamate. Also catalyzes the removal of polyglutamate residues from the carboxy-terminus of non-tubulin proteins such as MYLK. Mediates the deglutamylation of nucleotidyltransferase CGAS, leading to CGAS antiviral defense response activation. Involved in KLF4 deglutamylation which promotes KLF4 proteasome-mediated degradation, thereby negatively regulating cell pluripotency maintenance and embryogenesis. The sequence is that of Cytosolic carboxypeptidase 6 from Mus musculus (Mouse).